A 210-amino-acid chain; its full sequence is Proteasome subunit beta (210 aa).

The propeptide at 1–9 (MDNDKYLKG) is removed in mature form; by autocatalysis. Thr-10 serves as the catalytic Nucleophile.

It belongs to the peptidase T1B family. As to quaternary structure, the 20S proteasome core is composed of 14 alpha and 14 beta subunits that assemble into four stacked heptameric rings, resulting in a barrel-shaped structure. The two inner rings, each composed of seven catalytic beta subunits, are sandwiched by two outer rings, each composed of seven alpha subunits. The catalytic chamber with the active sites is on the inside of the barrel. Has a gated structure, the ends of the cylinder being occluded by the N-termini of the alpha-subunits. Is capped at one or both ends by the proteasome regulatory ATPase, PAN.

The protein resides in the cytoplasm. The enzyme catalyses Cleavage of peptide bonds with very broad specificity.. With respect to regulation, the formation of the proteasomal ATPase PAN-20S proteasome complex, via the docking of the C-termini of PAN into the intersubunit pockets in the alpha-rings, triggers opening of the gate for substrate entry. Interconversion between the open-gate and close-gate conformations leads to a dynamic regulation of the 20S proteasome proteolysis activity. Its function is as follows. Component of the proteasome core, a large protease complex with broad specificity involved in protein degradation. The sequence is that of Proteasome subunit beta from Methanosarcina mazei (strain ATCC BAA-159 / DSM 3647 / Goe1 / Go1 / JCM 11833 / OCM 88) (Methanosarcina frisia).